The primary structure comprises 325 residues: 5-dehydro-2-deoxygluconokinase (325 aa).

This sequence belongs to the carbohydrate kinase PfkB family.

It carries out the reaction 5-dehydro-2-deoxy-D-gluconate + ATP = 6-phospho-5-dehydro-2-deoxy-D-gluconate + ADP + H(+). Its pathway is polyol metabolism; myo-inositol degradation into acetyl-CoA; acetyl-CoA from myo-inositol: step 5/7. Its function is as follows. Catalyzes the phosphorylation of 5-dehydro-2-deoxy-D-gluconate (2-deoxy-5-keto-D-gluconate or DKG) to 6-phospho-5-dehydro-2-deoxy-D-gluconate (DKGP). This Bacillus subtilis (strain 168) protein is 5-dehydro-2-deoxygluconokinase (iolC).